The following is a 198-amino-acid chain: FMN-dependent NADH:quinone oxidoreductase (198 aa).

FMN contacts are provided by residues Ser-10, Ser-16–Ser-18, Met-94–Phe-97, and Thr-138–Gly-141.

The protein belongs to the azoreductase type 1 family. As to quaternary structure, homodimer. It depends on FMN as a cofactor.

It catalyses the reaction 2 a quinone + NADH + H(+) = 2 a 1,4-benzosemiquinone + NAD(+). The catalysed reaction is N,N-dimethyl-1,4-phenylenediamine + anthranilate + 2 NAD(+) = 2-(4-dimethylaminophenyl)diazenylbenzoate + 2 NADH + 2 H(+). Quinone reductase that provides resistance to thiol-specific stress caused by electrophilic quinones. In terms of biological role, also exhibits azoreductase activity. Catalyzes the reductive cleavage of the azo bond in aromatic azo compounds to the corresponding amines. In Shewanella putrefaciens (strain CN-32 / ATCC BAA-453), this protein is FMN-dependent NADH:quinone oxidoreductase.